We begin with the raw amino-acid sequence, 508 residues long: CXXC-type zinc finger protein 1 (508 aa).

The CXXC-type zinc finger occupies 10 to 47 (EDVWKERCMNCIRCNDEKNCGTCWPCRNGKTCDMRKCF). 2 disordered regions span residues 95–156 (QQVE…EPDK) and 453–508 (KSQS…TQNN). Low complexity-rich tracts occupy residues 113–123 (AAAAAQQRKAN) and 454–481 (SQSTSSSASAHGATTPISSTSSSSSSSS).

In terms of assembly, component of the SET2 complex (also known as the SET1/COMPASS complex), which contains at least set-2, swd-2.1, cfp-1, rbbp-5, wdr-5.1, dpy-30 and ash-2. Within the complex, interacts with wdr-5.1, ash-2 and dpy-30. Also interacts with the SIN3S complex, which contains at least sin-3, hda-1, athp-1 and mrg-1. Interacts with sin-3, hda-1 and mrg-1.

The protein localises to the nucleus. Its function is as follows. Transcriptional activator that exhibits a unique DNA binding specificity for CpG motifs; enriched at promoters containing the trimethylation mark on histone H3 'Lys-4' (H3K4me3). Forms part of the SET2 complex and interacts with the SIN3S HDAC complex at promoters. Required for H3K4 trimethylation and plays a repressive role in the expression of heat shock and salt-inducible genes. Required for fertility, in cooperation with class I histone deacetylases (HDACs). The polypeptide is CXXC-type zinc finger protein 1 (Caenorhabditis elegans).